The chain runs to 51 residues: Large ribosomal subunit protein eL39 (51 aa).

The protein belongs to the eukaryotic ribosomal protein eL39 family.

The sequence is that of Large ribosomal subunit protein eL39 (rpl39e) from Methanocaldococcus jannaschii (strain ATCC 43067 / DSM 2661 / JAL-1 / JCM 10045 / NBRC 100440) (Methanococcus jannaschii).